We begin with the raw amino-acid sequence, 330 residues long: Aspartate--ammonia ligase (330 aa).

Belongs to the class-II aminoacyl-tRNA synthetase family. AsnA subfamily.

The protein resides in the cytoplasm. The enzyme catalyses L-aspartate + NH4(+) + ATP = L-asparagine + AMP + diphosphate + H(+). It participates in amino-acid biosynthesis; L-asparagine biosynthesis; L-asparagine from L-aspartate (ammonia route): step 1/1. This is Aspartate--ammonia ligase from Actinobacillus pleuropneumoniae serotype 7 (strain AP76).